Here is a 795-residue protein sequence, read N- to C-terminus: Histidine biosynthesis trifunctional protein (795 aa).

The phosphoribosyl-AMP cyclohydrolase stretch occupies residues 1–225 (MLPVVPVFNA…VVRQGGSGSF (225 aa)). The segment at 226–308 (CHLETESCFG…FYFAMARLVA (83 aa)) is phosphoribosyl-ATP pyrophosphohydrolase. The segment at 309–795 (NGVSLEDVER…KLGLLPSGFE (487 aa)) is histidinol dehydrogenase. Residues Q614 and H617 each contribute to the Zn(2+) site. Catalysis depends on residues E683 and H684. 2 residues coordinate Zn(2+): D717 and H776.

In the C-terminal section; belongs to the histidinol dehydrogenase family. The cofactor is Zn(2+).

It catalyses the reaction 1-(5-phospho-beta-D-ribosyl)-5'-AMP + H2O = 1-(5-phospho-beta-D-ribosyl)-5-[(5-phospho-beta-D-ribosylamino)methylideneamino]imidazole-4-carboxamide. It carries out the reaction 1-(5-phospho-beta-D-ribosyl)-ATP + H2O = 1-(5-phospho-beta-D-ribosyl)-5'-AMP + diphosphate + H(+). The enzyme catalyses L-histidinol + 2 NAD(+) + H2O = L-histidine + 2 NADH + 3 H(+). It functions in the pathway amino-acid biosynthesis; L-histidine biosynthesis; L-histidine from 5-phospho-alpha-D-ribose 1-diphosphate: step 2/9. The protein operates within amino-acid biosynthesis; L-histidine biosynthesis; L-histidine from 5-phospho-alpha-D-ribose 1-diphosphate: step 3/9. It participates in amino-acid biosynthesis; L-histidine biosynthesis; L-histidine from 5-phospho-alpha-D-ribose 1-diphosphate: step 9/9. The polypeptide is Histidine biosynthesis trifunctional protein (HIS4) (Kluyveromyces lactis (strain ATCC 8585 / CBS 2359 / DSM 70799 / NBRC 1267 / NRRL Y-1140 / WM37) (Yeast)).